Consider the following 554-residue polypeptide: Kinesin-like protein 3 (554 aa).

Residues 3–325 (SIKVVCRIRP…LRFGHRAKSI (323 aa)) enclose the Kinesin motor domain. ATP contacts are provided by residues 84 to 91 (GQTGSGKT) and 233 to 240 (GSESVGKS). Residues 446-473 (LSSTKQQLSDLMTALGDAQERYVELVKN) are a coiled coil.

Belongs to the TRAFAC class myosin-kinesin ATPase superfamily. Kinesin family.

The protein resides in the cytoplasm. It is found in the cytoskeleton. In terms of biological role, cytoplasmic motor that could play a role in Golgi membrane recycling. In Schizosaccharomyces pombe (strain 972 / ATCC 24843) (Fission yeast), this protein is Kinesin-like protein 3 (klp3).